A 493-amino-acid polypeptide reads, in one-letter code: MLKALFLTMLTLALVKSQDTEETITYTQCTDGYEWDPVRQQCKDIDECDIVPDACKGGMKCVNHYGGYLCLPKTAQIIVNNEQPQQETPPAEGTSGATTGVVAASSMATSGVLPGGGFVASAAAVAGPEVQAGRNNFVIRRNPADPQRIPSNPSHRIQCAAGYEQSEHNVCQDIDECTAGTHNCRADQVCINLRGSFACQCPPGYQKRGEQCVDIDECTIPPYCHQRCVNTPGSFYCQCSPGFQLAANNYTCVDINECDASNQCAQQCYNILGSFICQCNQGYELSSDRLNCEDIDECRTSSYLCQYQCVNEPGKFSCMCPQGYQVVRSRTCQDINECETTNECREDEMCWNYHGGFRCYPRNPCQDPYILTPENRCVCPVSNAMCRELPQSIVYKYMSIRSDRSVPSDIFQIQATTIYANTINTFRIKSGNENGEFYLRQTSPVSAMLVLVKSLSGPREHIVDLEMLTVSSIGTFRTSSVLRLTIIVGPFSF.

Positions 1-17 (MLKALFLTMLTLALVKS) are cleaved as a signal peptide. Residues 26-71 (YTQCTDGYEWDPVRQQCKDIDECDIVPDACKGGMKCVNHYGGYLCL) enclose the EGF-like 1; atypical domain. The 41-residue stretch at 173-213 (DIDECTAGTHNCRADQVCINLRGSFACQCPPGYQKRGEQCV) folds into the EGF-like 2; calcium-binding domain. Cystine bridges form between C177–C190, C184–C199, C201–C212, C218–C228, C224–C237, C239–C252, C258–C268, C264–C277, C279–C292, C298–C309, C305–C318, C320–C332, C338–C350, C344–C359, and C365–C377. Positions 214–253 (DIDECTIPPYCHQRCVNTPGSFYCQCSPGFQLAANNYTCV) constitute an EGF-like 3; calcium-binding domain. N-linked (GlcNAc...) asparagine glycosylation is present at N249. Residues 254–293 (DINECDASNQCAQQCYNILGSFICQCNQGYELSSDRLNCE) form the EGF-like 4; calcium-binding domain. The mediates interaction with TIMP3 stretch occupies residues 259-493 (DASNQCAQQC…LTIIVGPFSF (235 aa)). The region spanning 294–333 (DIDECRTSSYLCQYQCVNEPGKFSCMCPQGYQVVRSRTCQ) is the EGF-like 5; calcium-binding domain. Residues 334–378 (DINECETTNECREDEMCWNYHGGFRCYPRNPCQDPYILTPENRCV) form the EGF-like 6; calcium-binding domain.

It belongs to the fibulin family. Interacts with ECM1. Interacts with TIMP3.

It is found in the secreted. The protein resides in the extracellular space. The protein localises to the extracellular matrix. In terms of biological role, binds EGFR, the EGF receptor, inducing EGFR autophosphorylation and the activation of downstream signaling pathways. May play a role in cell adhesion and migration. May function as a negative regulator of chondrocyte differentiation. In the olfactory epithelium, it may regulate glial cell migration, differentiation and the ability of glial cells to support neuronal neurite outgrowth. The chain is EGF-containing fibulin-like extracellular matrix protein 1 (EFEMP1) from Macaca fascicularis (Crab-eating macaque).